A 1745-amino-acid polypeptide reads, in one-letter code: ADAMTS-like protein 1 (1745 aa).

The signal sequence occupies residues 1-28 (MECCRRAAPGTPLLVLAFLLLSSRTARS). Residues 33 to 82 (EGLWDAWGPWSECSRTCGGGASYSLRRCLSSKSCEGRNIRYRTCSNVDCP) form the TSP type-1 1 domain. 3 disulfide bridges follow: C45-C76, C49-C81, and C60-C66. N-linked (GlcNAc...) asparagine glycosylation is present at N251. S310 and S391 each carry an O-linked (Fuc...) serine glycan. 6 consecutive TSP type-1 domains span residues 376 to 424 (PLPR…MYTP), 436 to 493 (DCPK…TPCY), 522 to 584 (EEPS…GPCN), 607 to 667 (ELYD…DPCP), 703 to 762 (CPPA…KKDD), and 763 to 825 (CPSE…ATCA). Residue T451 is glycosylated (O-linked (Fuc...) threonine). Intrachain disulfides connect C534–C578, C538–C583, and C549–C567. 4 disulfide bridges follow: C775–C819, C779–C824, C790–C807, and C874–C922. The 103-residue stretch at 836-938 (PHIAAARNIY…EQFVIKLIGG (103 aa)) folds into the Ig-like C2-type 1 domain. Disordered regions lie at residues 966–991 (EALQTHKHQNGIFSNGSKAEKRGLTA) and 1114–1137 (VSGFSSSLRSSSGEAGGGSRRPHR). Residues 1115-1126 (SGFSSSLRSSSG) show a composition bias toward low complexity. Ig-like C2-type domains follow at residues 1139-1241 (PAIL…IAVT), 1261-1352 (PTVT…TQLL), and 1378-1468 (PSVL…ASLV). 3 cysteine pairs are disulfide-bonded: C1177–C1225, C1283–C1336, and C1401–C1452. 2 consecutive TSP type-1 domains span residues 1528–1591 (CPSR…QLCV) and 1649–1709 (CSVH…TPCE). One can recognise a PLAC domain in the interval 1709–1745 (ENTECRDTTRYCEKVRQLKLCQLGQFRSRCCGTCGKA).

Monomer. Glycosylated. O-fucosylated by POFUT2 on a serine or a threonine residue found within the consensus sequence C1-X(2)-(S/T)-C2-G of the TSP type-1 repeat domains where C1 and C2 are the first and second cysteine residue of the repeat, respectively. Fucosylated repeats can then be further glycosylated by the addition of a beta-1,3-glucose residue by the glucosyltransferase, B3GALTL. Fucosylation mediates the efficient secretion of ADAMTS family members. Can also be C-glycosylated with one or two mannose molecules on tryptophan residues within the consensus sequence W-X-X-W of the TPRs, and N-glycosylated. These other glycosylations can also facilitate secretion. In terms of processing, disulfide bonds are present.

The protein localises to the secreted. Its subcellular location is the extracellular space. It localises to the extracellular matrix. The protein is ADAMTS-like protein 1 (Adamtsl1) of Mus musculus (Mouse).